Here is a 515-residue protein sequence, read N- to C-terminus: Integrator complex subunit 14 (515 aa).

The 203-residue stretch at 2–204 folds into the VWFA domain; sequence PTVVVMDVSL…KNVQSMFGKL (203 aa). Mg(2+) is bound by residues S10, S12, and T86. Residue K418 is modified to N6-acetyllysine.

This sequence belongs to the Integrator subunit 14 family. In terms of assembly, component of the Integrator complex, composed of core subunits INTS1, INTS2, INTS3, INTS4, INTS5, INTS6, INTS7, INTS8, INTS9/RC74, INTS10, INTS11/CPSF3L, INTS12, INTS13, INTS14 and INTS15. The core complex associates with protein phosphatase 2A subunits PPP2CA and PPP2R1A, to form the Integrator-PP2A (INTAC) complex. INTS14 is part of the tail subcomplex, composed of INTS10, INTS13, INTS14 and INTS15.

Its subcellular location is the nucleus. In terms of biological role, component of the integrator complex, a multiprotein complex that terminates RNA polymerase II (Pol II) transcription in the promoter-proximal region of genes. The integrator complex provides a quality checkpoint during transcription elongation by driving premature transcription termination of transcripts that are unfavorably configured for transcriptional elongation: the complex terminates transcription by (1) catalyzing dephosphorylation of the C-terminal domain (CTD) of Pol II subunit POLR2A/RPB1 and SUPT5H/SPT5, (2) degrading the exiting nascent RNA transcript via endonuclease activity and (3) promoting the release of Pol II from bound DNA. The integrator complex is also involved in terminating the synthesis of non-coding Pol II transcripts, such as enhancer RNAs (eRNAs), small nuclear RNAs (snRNAs), telomerase RNAs and long non-coding RNAs (lncRNAs). Within the integrator complex, INTS14 is part of the integrator tail module that acts as a platform for the recruitment of transcription factors at promoters. The polypeptide is Integrator complex subunit 14 (Mus musculus (Mouse)).